Consider the following 102-residue polypeptide: NADH-quinone oxidoreductase subunit K 2 (102 aa).

3 helical membrane-spanning segments follow: residues 4-24 (ITPV…TVGV), 30-50 (IVII…NLIA), and 62-82 (IFAI…LGIL).

This sequence belongs to the complex I subunit 4L family. As to quaternary structure, NDH-1 is composed of 14 different subunits. Subunits NuoA, H, J, K, L, M, N constitute the membrane sector of the complex.

Its subcellular location is the cell inner membrane. The enzyme catalyses a quinone + NADH + 5 H(+)(in) = a quinol + NAD(+) + 4 H(+)(out). Its function is as follows. NDH-1 shuttles electrons from NADH, via FMN and iron-sulfur (Fe-S) centers, to quinones in the respiratory chain. The immediate electron acceptor for the enzyme in this species is believed to be ubiquinone. Couples the redox reaction to proton translocation (for every two electrons transferred, four hydrogen ions are translocated across the cytoplasmic membrane), and thus conserves the redox energy in a proton gradient. The sequence is that of NADH-quinone oxidoreductase subunit K 2 from Solibacter usitatus (strain Ellin6076).